The following is a 177-amino-acid chain: Large ribosomal subunit protein uL6 (177 aa).

It belongs to the universal ribosomal protein uL6 family. Part of the 50S ribosomal subunit.

This protein binds to the 23S rRNA, and is important in its secondary structure. It is located near the subunit interface in the base of the L7/L12 stalk, and near the tRNA binding site of the peptidyltransferase center. The sequence is that of Large ribosomal subunit protein uL6 from Pectobacterium carotovorum subsp. carotovorum (strain PC1).